Here is a 345-residue protein sequence, read N- to C-terminus: N-acetyl-gamma-glutamyl-phosphate reductase (345 aa).

Residue Cys-149 is part of the active site.

Belongs to the NAGSA dehydrogenase family. Type 1 subfamily.

It localises to the cytoplasm. It carries out the reaction N-acetyl-L-glutamate 5-semialdehyde + phosphate + NADP(+) = N-acetyl-L-glutamyl 5-phosphate + NADPH + H(+). It functions in the pathway amino-acid biosynthesis; L-arginine biosynthesis; N(2)-acetyl-L-ornithine from L-glutamate: step 3/4. Functionally, catalyzes the NADPH-dependent reduction of N-acetyl-5-glutamyl phosphate to yield N-acetyl-L-glutamate 5-semialdehyde. This chain is N-acetyl-gamma-glutamyl-phosphate reductase, found in Geobacillus stearothermophilus (Bacillus stearothermophilus).